We begin with the raw amino-acid sequence, 149 residues long: Calmodulin (149 aa).

At Ala-2 the chain carries N-acetylalanine. 4 consecutive EF-hand domains span residues 8–43 (EQIS…LGQN), 44–79 (PTEA…KLKD), 81–116 (DTEE…LGEK), and 117–149 (LTNE…MIAK). Residues Asp-21, Asp-23, Asp-25, Thr-27, Glu-32, Asp-57, Asp-59, Asn-61, Thr-63, Glu-68, Asp-94, Asp-96, Asp-98, Tyr-100, Glu-105, Asp-130, Asp-132, Asp-134, Gln-136, and Glu-141 each coordinate Ca(2+).

Belongs to the calmodulin family.

Its subcellular location is the cytoplasm. Functionally, calmodulin mediates the control of a large number of enzymes, ion channels and other proteins by Ca(2+). Among the enzymes to be stimulated by the calmodulin-Ca(2+) complex are a number of protein kinases and phosphatases. The protein is Calmodulin of Plasmodium falciparum (isolate 3D7).